The chain runs to 95 residues: MAERLSPADIEAQLANLPGWKQVGDRLEQTFTFKDFLGSIAFVNRLVDPAEQAGHHPDLSISWNRVTVCLTTHDVGGITQKDIDLAKVISNLAVV.

The protein belongs to the pterin-4-alpha-carbinolamine dehydratase family.

It carries out the reaction (4aS,6R)-4a-hydroxy-L-erythro-5,6,7,8-tetrahydrobiopterin = (6R)-L-erythro-6,7-dihydrobiopterin + H2O. The polypeptide is Putative pterin-4-alpha-carbinolamine dehydratase (Thermosynechococcus vestitus (strain NIES-2133 / IAM M-273 / BP-1)).